The sequence spans 193 residues: Xanthine phosphoribosyltransferase (193 aa).

Residues leucine 20 and threonine 27 each coordinate xanthine. Residue 128–132 (ANGQA) coordinates 5-phospho-alpha-D-ribose 1-diphosphate. Lysine 156 is a xanthine binding site.

The protein belongs to the purine/pyrimidine phosphoribosyltransferase family. Xpt subfamily. As to quaternary structure, homodimer.

The protein resides in the cytoplasm. It carries out the reaction XMP + diphosphate = xanthine + 5-phospho-alpha-D-ribose 1-diphosphate. It functions in the pathway purine metabolism; XMP biosynthesis via salvage pathway; XMP from xanthine: step 1/1. Converts the preformed base xanthine, a product of nucleic acid breakdown, to xanthosine 5'-monophosphate (XMP), so it can be reused for RNA or DNA synthesis. This chain is Xanthine phosphoribosyltransferase, found in Streptococcus pneumoniae serotype 19F (strain G54).